We begin with the raw amino-acid sequence, 261 residues long: MSSGAVLTSQEYITHHLSNLKVGEGFWAVHLDSLGWSVFLGLVFLTIFRSVAKKATSGVPGKLQCAVEMVVGFVDDSVKSTFHGKNALIAPLSLTIFVWILLMNSMDWVPVDLLPHLIHWVTGMPLGDIYMKPVPTADPNITFGLALGVFILIIYYSIKVKGVGGFMKELTTQPFGHWSLYPVNFILETVTMLARPLSLALRLFGNLYAGELIFLLIATIGVFQLPVHFLWAAFHLLVIPLQAFIFMMLTIVYLSLAHEDH.

5 helical membrane-spanning segments follow: residues 28–48 (AVHLDSLGWSVFLGLVFLTIF), 89–109 (IAPLSLTIFVWILLMNSMDWV), 140–160 (NITFGLALGVFILIIYYSIKV), 203–223 (LFGNLYAGELIFLLIATIGVF), and 229–249 (FLWAAFHLLVIPLQAFIFMML).

It belongs to the ATPase A chain family. As to quaternary structure, F-type ATPases have 2 components, CF(1) - the catalytic core - and CF(0) - the membrane proton channel. CF(1) has five subunits: alpha(3), beta(3), gamma(1), delta(1), epsilon(1). CF(0) has three main subunits: a(1), b(2) and c(9-12). The alpha and beta chains form an alternating ring which encloses part of the gamma chain. CF(1) is attached to CF(0) by a central stalk formed by the gamma and epsilon chains, while a peripheral stalk is formed by the delta and b chains.

The protein localises to the cell inner membrane. Key component of the proton channel; it plays a direct role in the translocation of protons across the membrane. This is ATP synthase subunit a from Colwellia psychrerythraea (strain 34H / ATCC BAA-681) (Vibrio psychroerythus).